Here is a 419-residue protein sequence, read N- to C-terminus: Dual specificity mitogen-activated protein kinase kinase 7 (419 aa).

The residue at position 2 (alanine 2) is an N-acetylalanine. A coiled-coil region spans residues 2–30 (AASSLEQKLSRLEAKLKQENREARRRIDL). Residues 18–30 (KQENREARRRIDL) are compositionally biased toward basic and acidic residues. The disordered stretch occupies residues 18 to 76 (KQENREARRRIDLNLDISPQRPRPTLQLPLANDGGSRSPSSESSPQHPTPPARPRHMLG). A compositionally biased stretch (low complexity) spans 36 to 63 (PQRPRPTLQLPLANDGGSRSPSSESSPQ). The interval 37 to 57 (QRPRPTLQLPLANDGGSRSPS) is d domain. A Protein kinase domain is found at 120–380 (LENLGEMGSG…YNKLLEHSFI (261 aa)). Residues 126-134 (MGSGTCGQV) and lysine 149 each bind ATP. Residue aspartate 243 is the Proton acceptor of the active site. Serine 271 carries the phosphoserine; by MAP3K modification. Threonine 275 carries the post-translational modification Phosphothreonine; by MAP3K. The interval 377-400 (HSFIKRYETLEVDVASWFKDVMAK) is DVD domain. Phosphoserine is present on serine 411.

It belongs to the protein kinase superfamily. STE Ser/Thr protein kinase family. MAP kinase kinase subfamily. Interacts with isoform 1 of VRK2. Interacts (via its D domain) with its substrates MAPK8/JNK1, MAPK9/JNK2 and MAPK10/JNK3. Interacts (via its DVD domain) with MAP3Ks activators like MAP3K5/ASK1 and MAP3K1/MEKK1. Interacts with MAPK8IP1/JIP1, MAPK8IP2/JIP2 and MAPK8IP3/JIP3 scaffold proteins. Interacts with RASSF7, the interaction promotes phosphorylation. Found in a complex with SH3RF1, RAC1, MAP3K11/MLK3, MAPK8IP1/JIP1 and MAPK8/JNK1. Found in a complex with SH3RF1, RAC2, MAP3K7/TAK1, MAPK8IP1/JIP1, MAPK8/JNK1 and MAPK9/JNK2. The cofactor is Mg(2+). Activated by phosphorylation on Ser-271 and Thr-275 by MAP kinase kinase kinases (MAP3Ks). In terms of tissue distribution, ubiquitous; with highest level of expression in skeletal muscle. Isoform 3 is found at low levels in placenta, fetal liver, and skeletal muscle.

The protein localises to the nucleus. It localises to the cytoplasm. It catalyses the reaction L-seryl-[protein] + ATP = O-phospho-L-seryl-[protein] + ADP + H(+). It carries out the reaction L-threonyl-[protein] + ATP = O-phospho-L-threonyl-[protein] + ADP + H(+). The catalysed reaction is L-tyrosyl-[protein] + ATP = O-phospho-L-tyrosyl-[protein] + ADP + H(+). Activated by phosphorylation by specific MAP kinase kinase kinases such as MAP3K1/MEKK1, MAP3K3/MEKK3, MAP3K11/MLK3 and MAP3K12/DLK. In terms of biological role, dual specificity protein kinase which acts as an essential component of the MAP kinase signal transduction pathway. Essential component of the stress-activated protein kinase/c-Jun N-terminal kinase (SAP/JNK) signaling pathway. With MAP2K4/MKK4, is the one of the only known kinase to directly activate the stress-activated protein kinase/c-Jun N-terminal kinases MAPK8/JNK1, MAPK9/JNK2 and MAPK10/JNK3. MAP2K4/MKK4 and MAP2K7/MKK7 both activate the JNKs by phosphorylation, but they differ in their preference for the phosphorylation site in the Thr-Pro-Tyr motif. MAP2K4/MKK4 shows preference for phosphorylation of the Tyr residue and MAP2K7/MKK7 for the Thr residue. The monophosphorylation of JNKs on the Thr residue is sufficient to increase JNK activity indicating that MAP2K7/MKK7 is important to trigger JNK activity, while the additional phosphorylation of the Tyr residue by MAP2K4/MKK4 ensures optimal JNK activation. Has a specific role in JNK signal transduction pathway activated by pro-inflammatory cytokines. The MKK/JNK signaling pathway is also involved in mitochondrial death signaling pathway, including the release cytochrome c, leading to apoptosis. Part of a non-canonical MAPK signaling pathway, composed of the upstream MAP3K12 kinase and downstream MAP kinases MAPK1/ERK2 and MAPK3/ERK1, that enhances the AP-1-mediated transcription of APP in response to APOE. The protein is Dual specificity mitogen-activated protein kinase kinase 7 (MAP2K7) of Homo sapiens (Human).